The primary structure comprises 161 residues: Zinc finger A20 and AN1 domain-containing stress-associated protein 4 (161 aa).

Residues 10 to 44 (PEGHRLCVNNCGFFGSSATMNLCSNCYGDLCLKQQ) form an A20-type zinc finger. Zn(2+)-binding residues include C16, C20, C32, and C35. Positions 76 to 85 (TTKKTEEKKP) are enriched in basic and acidic residues. The interval 76–99 (TTKKTEEKKPIQIPTEQPSPPQRP) is disordered. The AN1-type zinc finger occupies 96-142 (PQRPNRCTVCRKRVGLTGFMCRCGTTFCGSHRYPEVHGCTFDFKSAG). Positions 102, 105, 116, 118, 123, 126, 132, and 134 each coordinate Zn(2+).

In terms of biological role, may be involved in environmental stress response. This Arabidopsis thaliana (Mouse-ear cress) protein is Zinc finger A20 and AN1 domain-containing stress-associated protein 4 (SAP4).